Consider the following 1641-residue polypeptide: MQDVRNINLVNNSSNSHDSSLANSKMPRNFKLLSDPQLVKCGTRLYRYDGLMPGDPSYPTITPRDPRNPLIRIRARAVEPLMLLIPRFVIDSDYVGQPPAVEVTIVNLNDNIDKQFLASMLDKCGTSDEINIYHHPITNKHLGIARIVFDSTKGARQFVEKYNQKSVMGKILDVFCDPFGATLKKSLESLTNSVAGKQLIGPKVTPQWTFQQAALEDTEFIHGYPEKNGEHIKDIYTTQTNHEIPNRSRDRNWNRDKERERDRHFKERSRHSSERSYDRDRGMRENVGTSIRRRRTFYRRRSSDISPEDSRDILIMTRERSRDSDSRPRDYCRSRERESFRDRKRSHEKGRDQPREKREHYYNSSKDREYRGRDRDRSAEIDQRDRGSLKYCSRYSLHEYIETDVRRSSNTISSYYSASSLPIASHGFNSCSFPSIENIKTWSDRRAWTAFQPDFHPVQPPPPPPEEIDNWDEEEHDKNSIVPTHYGCMAKLQPPVPSNVNFATKLQSVTQPNSDPGTVDLDTRIALIFKGKTFGNAPPFLQMDSSDSETDQGKPEVFSDVNSDSNNSENKKRSCEKNNKVLHQPNEASDISSDEELIGKKDKSKLSLICEKEVNDDNMSLSSLSSQEDPIQTKEGAEYKSIMSSYMYSHSNQNPFYYHASGYGHYLSGIPSESASRLFSNGAYVHSEYLKAVASFNFDSFSKPYDYNKGALSDQNDGIRQKVKQVIGYIVEELKQILKRDVNKRMIEITAFKHFETWWDEHTSKARSKPLFEKADSTVNTPLNCIKDTSYNEKNPDINLLINAHREVADFQSYSSIGLRAAMPKLPSFRRIRKHPSPIPTKRNFLERDLSDQEEMVQRSDSDKEDSNVEISDTARSKIKGPVPIQESDSKSHTSGLNSKRKGSASSFFSSSSSSTSSEAEYEAIDCVEKARTSEEDSPRGYGQRNLNQRTTTIRNRNLVGTMDVINVRNLCSGSNEFKKENVTKRTKKNIYSDTDEDNDRTLFPALKEKNISTILSDLEEISKDSCIGLDENGIEPTILRKIPNTPKLNEECRRSLTPVPPPGYNEEEIKKKVDCKQKPSFEYDRIYSDSEEEKEYQERRKRNTEYMAQMEREFLEEQEKRIEKSLDKNLQSPNNIVKNNNSPRNKNDETRKTAISQTRSCFESASKVDTTLVNIISVENDINEFGPHEEGDVLTNGCNKMYTNSKGKTKRTQSPVYSEGGSSQASQASQVALEHCYSLPPHSVSLGDYPSGKVNETKNILKREAENIAIVSQMTRTGPGRPRKDPICIQKKKRDLAPRMSNVKSKMTPNGDEWPDLAHKNVHFVPCDMYKTRDQNEEMVILYTFLTKGIDAEDINFIKMSYLDHLHKEPYAMFLNNTHWVDHCTTDRAFWPPPSKKRRKDDELIRHKTGCARTEGFYKLDVREKAKHKYHYAKANTEDSFNEDRSDEPTALTNHHHNKLISKMQGISREARSNQRRLLTAFGSMGESELLKFNQLKFRKKQLKFAKSAIHDWGLFAMEPIAADEMVIEYVGQMIRPVVADLRETKYEAIGIGSSYLFRIDMETIIDATKCGNLARFINHSCNPNCYAKVITIESEKKIVIYSKQPIGINEEITYDYKFPLEDEKIPCLCGAQGCRGTLN.

The interval Met-1–Asn-23 is disordered. Residues Asn-8–Asn-23 show a composition bias toward low complexity. The RRM domain maps to Val-101–Phe-179. 6 disordered regions span residues Tyr-236–Arg-384, Ala-537–Glu-596, Arg-831–Ser-915, Lys-930–Gln-949, Gln-1119–Ala-1155, and Asn-1205–Ala-1226. The span at Ile-244 to Arg-284 shows a compositional bias: basic and acidic residues. Residues Ile-291–Arg-300 are compositionally biased toward basic residues. Basic and acidic residues-rich tracts occupy residues Glu-308 to Arg-341 and Lys-349 to Arg-384. Low complexity predominate over residues Glu-556–Ser-568. Composition is skewed to basic and acidic residues over residues Glu-569–Asn-579 and Asn-844–Ser-867. Residues Ser-904–Ser-915 are compositionally biased toward low complexity. Basic and acidic residues-rich tracts occupy residues Lys-930–Pro-939 and Gln-1119–Asp-1128. Positions Ser-1091–Gln-1132 form a coiled coil. Composition is skewed to polar residues over residues Lys-1129–Arg-1145 and Asn-1205–Val-1217. The short motif at Arg-1473–Arg-1478 is the RxxxRR motif element. The 118-residue stretch at Lys-1502–Lys-1619 folds into the SET domain. Tyr-1618 serves as a coordination point for S-adenosyl-L-methionine. Positions Glu-1625–Asn-1641 constitute a Post-SET domain.

It belongs to the class V-like SAM-binding methyltransferase superfamily. As to quaternary structure, component of the Set1C/COMPASS complex, composed at least of the catalytic subunit Set1, wds/WDR5, Wdr82, Rbbp5, ash2, Cfp1/CXXC1, hcf and Dpy-30L1.

Its subcellular location is the nucleus. The protein resides in the chromosome. It catalyses the reaction L-lysyl(4)-[histone H3] + 3 S-adenosyl-L-methionine = N(6),N(6),N(6)-trimethyl-L-lysyl(4)-[histone H3] + 3 S-adenosyl-L-homocysteine + 3 H(+). The enzyme catalyses N(6)-methyl-L-lysyl(4)-[histone H3] + S-adenosyl-L-methionine = N(6),N(6)-dimethyl-L-lysyl(4)-[histone H3] + S-adenosyl-L-homocysteine + H(+). It carries out the reaction N(6),N(6)-dimethyl-L-lysyl(4)-[histone H3] + S-adenosyl-L-methionine = N(6),N(6),N(6)-trimethyl-L-lysyl(4)-[histone H3] + S-adenosyl-L-homocysteine + H(+). In terms of biological role, catalytic component of the COMPASS (Set1C) complex that specifically mono-, di- and trimethylates histone H3 to form H3K4me1/2/3. Binds RNAs which might negatively affect its histone methyltransferase activity. COMPASS recognizes ubiquitinated H2B on one face of the nucleosome which stimulates the methylation of H3 on the opposing face. Set1-dependent trimethylation regulates chromatin changes at active promoters that ensure optimal RNA polymerase II release into productive elongation, thereby contributing to optimal transcription. The protein is Histone-lysine N-methyltransferase SETD1 of Drosophila melanogaster (Fruit fly).